We begin with the raw amino-acid sequence, 515 residues long: MEELQLQGYLEKDGSRQFLYPLIFQEYIYTLAHDHGLNSSIFYEPMEIVGLGYDNKSSSVLVKRLITRMYQQNSLIYSMNDFNQNQFVGHNNSFYSNFDSQMVSEGFAVIAEIPFSLRLVPSSEEIPKSQNLRSIHSIFPFLEDKLSHFNYVLDILIPYPIHLEILVQILQCWIQDVPSLHFLRLFLHEFHNWNNLITPTKSISVFSKENKRLFRILYNSYVSEYEFVFVFLRKQSYYLRSTSSRAFLERTHFYVKIEHLIDVCHNHFQKILWFFKDSFMHYVRYKGKAILASRGTYLLIKKWKCYLVNFWQYNFHFWSKPYRIHINPFSNYSFYFLGYISSVLINPSAVKNQMLENFYLVDTLTQKFDTIVPVIPLIGSLSKAKFCTILGHPISKPIWAELSDSDIIDRFGRICRNLSHYHSGSSKKQSLYRIKYILRLSCARTLARKHKSTVRNLLQRLGSGLLEEFFTEEEQVISPIFPKTTLFPLHGSHRERIWYLDIIRINDLANYLDWS.

It belongs to the intron maturase 2 family. MatK subfamily.

The protein localises to the plastid. It is found in the chloroplast. Its function is as follows. Usually encoded in the trnK tRNA gene intron. Probably assists in splicing its own and other chloroplast group II introns. The protein is Maturase K of Trillium pusillum (Dwarf wakerobin).